We begin with the raw amino-acid sequence, 239 residues long: Tetraspanin-9 (239 aa).

The Cytoplasmic segment spans residues 1-13 (MARGCLCCLKYMM). The chain crosses the membrane as a helical span at residues 14–34 (FLFNLIFWLCGCGLLGVGIWL). Over 35–55 (SVSQGNFATFSPSFPSLSAAN) the chain is Extracellular. A helical membrane pass occupies residues 56–76 (LVIAIGTIVMVTGFLGCLGAI). The Cytoplasmic segment spans residues 77 to 85 (KENRCLLLS). Residues 86-106 (FFIVLLIILLAELILIILFFV) form a helical membrane-spanning segment. Over 107 to 203 (YMDKVNENAR…VKMWFDDNKH (97 aa)) the chain is Extracellular. Asn-180 is a glycosylation site (N-linked (GlcNAc...) asparagine). Residues 204–224 (VLGTVGMCILIMQILGMAFSM) form a helical membrane-spanning segment. At 225–239 (TLFQHIHRTGKKYDA) the chain is on the cytoplasmic side.

Belongs to the tetraspanin (TM4SF) family. In terms of assembly, found in a complex with GP6. In terms of processing, glycosylated.

It localises to the membrane. This chain is Tetraspanin-9 (TSPAN9), found in Sus scrofa (Pig).